A 1058-amino-acid chain; its full sequence is MASSSSRTRSRSPFSHRRPPSPYSSASSTSSSLINNRLLPRSSSTPTSTVYNSGGVTGSRSMSITRTISDSGPIGGSGTYGAQSYPSEGLIGESGQTITSERDSISVTVRFRPMSEREYQRGDEIVWYPDADKMVRNEYNPLTAYAFDKVFGPQSTTPEVYDVAAKPVVKAAMEGVNGTVFAYGVTSSGKTHTMHGDQDFPGIIPLAIKDVFSIIQETTGREFLLRVSYLEIYNEVINDLLDPTGQNLRIREDSQGTYVEGIKEEVVLSPGHALSFIAAGEEHRHVGSNNFNLMSSRSHTIFTLMIESSAHGDQYDGVIFSQLNLIDLAGSESSKTETTGLRRKEGAYINKSLLTLGTVIGKLTEGKTTHVPFRDSKLTRLLQSSLSGHGHVSLICTVTPASSSTEETHNTLKFASRAKRIEINASRNKIIDEKSLIKKYQKEISTLKVELDQLRRGVLVGVSHEELLSLKQQLQEGQVKMQSRLEEEEEAKAALMSRIQKLTKLILVSTKNSIPGYLGDTPAHSRSISAGKDDKLDSLLLDSDNLASPSSTLSLASDARRSSSKFKDENSPVGSRAELTQGVMTPDEMDLLVEQVKMLAGEIAFGTSTLKRLVDQSMNDPENSKTQIQNLENDIQEKQRQMKSLEQRITESGEASIANASSIEMQEKVMRLMTQCNEKSFELEIISADNRILQEQLQTKCTENNELHEKVHLLEQRLSSQKATLSCCDVVTEEYVDELKKKVQSQEIENEKLKLEHVQSVEEKSGLRVQNQKLAEEASYAKELASAAAIELKNLADEVTKLSLQNAKLEKELVAARDLAAAAQKRNNNSMNSAANRNGTRPGRKARISDSWNLNQENLTMELQARKQREAVLEAALAEKEYIEEEFRKKAEEAKRREEALENDLANMWVLVAKLKKANSGALSIQKSDEAEPAKEDEVTELDNKNEQNAILKERQLVNGHEEVIVAKAEETPKEEPLVARLKARMQEMKEKEMKSQAAAAANADANSHICKVCFESPTATILLPCRHFCLCKSCSLACSECPICRTKISDRLFAFPS.

The transit peptide at 1–60 (MASSSSRTRSRSPFSHRRPPSPYSSASSTSSSLINNRLLPRSSSTPTSTVYNSGGVTGSR) directs the protein to the chloroplast. Positions 1–92 (MASSSSRTRS…QSYPSEGLIG (92 aa)) are disordered. Positions 8–19 (TRSRSPFSHRRP) are enriched in basic residues. The span at 23–49 (YSSASSTSSSLINNRLLPRSSSTPTST) shows a compositional bias: low complexity. The span at 50–70 (VYNSGGVTGSRSMSITRTISD) shows a compositional bias: polar residues. The region spanning 104 to 421 (SISVTVRFRP…LKFASRAKRI (318 aa)) is the Kinesin motor domain. 184–191 (GVTSSGKT) provides a ligand contact to ATP. Residues 422–509 (EINASRNKII…QKLTKLILVS (88 aa)) adopt a coiled-coil conformation. The disordered stretch occupies residues 549-578 (PSSTLSLASDARRSSSKFKDENSPVGSRAE). A compositionally biased stretch (basic and acidic residues) spans 558-570 (DARRSSSKFKDEN). Coiled coils occupy residues 621–658 (PENS…ASIA), 704–826 (NNEL…AQKR), 873–904 (LEAA…LEND), and 935–999 (KEDE…SQAA). Residues 824–838 (QKRNNNSMNSAANRN) show a composition bias toward low complexity. Residues 824 to 847 (QKRNNNSMNSAANRNGTRPGRKAR) are disordered. Residues 922-946 (ALSIQKSDEAEPAKEDEVTELDNKN) form a disordered region. Over residues 927-946 (KSDEAEPAKEDEVTELDNKN) the composition is skewed to basic and acidic residues. An RING-type zinc finger spans residues 1011–1046 (CKVCFESPTATILLPCRHFCLCKSCSLACSECPICR).

Belongs to the TRAFAC class myosin-kinesin ATPase superfamily. Kinesin family. KIN-7 subfamily.

It localises to the plastid. The protein resides in the chloroplast. The polypeptide is Kinesin-like protein KIN-7M, chloroplastic (Arabidopsis thaliana (Mouse-ear cress)).